Reading from the N-terminus, the 84-residue chain is MTDKIRTLQGRVVSDKMEKSIVVAIERFVKHPIYGKFIKRTTKMHVHDENNECGIGDVVEIRECRPLSKTKSWTLVRVVEKAVL.

It belongs to the universal ribosomal protein uS17 family. Part of the 30S ribosomal subunit.

Its function is as follows. One of the primary rRNA binding proteins, it binds specifically to the 5'-end of 16S ribosomal RNA. The chain is Small ribosomal subunit protein uS17 from Salmonella typhi.